A 2961-amino-acid chain; its full sequence is Zinc finger ZZ-type and EF-hand domain-containing protein 1 (2961 aa).

The disordered stretch occupies residues 1 to 41 (MGNAPSHSSEDEAAAAGGEGWGPHQDWAAVSGTTPGPGVAA). Gly-2 carries the N-myristoyl glycine lipid modification. Positions 111 to 146 (CSSEQFEEAFAQFDAEGDGTVDAENMLEALKNSSGA) constitute an EF-hand domain. One can recognise a DOC domain in the interval 226–405 (LVQKEKESPG…AIWYWSLLTS (180 aa)). Ser-240, Ser-1475, Ser-1488, and Ser-1509 each carry phosphoserine. A disordered region spans residues 1446–1531 (TADETSHLQP…PTRRPPFTRG (86 aa)). The span at 1485–1502 (GDQSPGLGTQPKLPSSSG) shows a compositional bias: polar residues. The residue at position 1512 (Thr-1512) is a Phosphothreonine. Over residues 1516 to 1531 (PLSPSTPTRRPPFTRG) the composition is skewed to low complexity. Position 1518 is a phosphoserine (Ser-1518). Thr-1521 and Thr-1523 each carry phosphothreonine. Ser-1537 and Ser-1540 each carry phosphoserine. 2 ZZ-type zinc fingers span residues 1778–1833 (NVDI…FTCD) and 1827–1882 (NMEF…MVTI). The Zn(2+) site is built by Cys-1783, Cys-1786, Cys-1797, Cys-1800, Cys-1806, Cys-1809, His-1819, His-1823, Cys-1832, Cys-1835, Cys-1846, Cys-1849, Cys-1855, Cys-1858, His-1868, and His-1872. 2 disordered regions span residues 1994-2078 (AVQG…PSPE) and 2426-2455 (LELD…KLDP). Residues 2009-2027 (AVHEEIRPVDFKQRNKADK) are compositionally biased toward basic and acidic residues. A compositionally biased stretch (polar residues) spans 2033–2043 (KDPSCQTQISD). Basic and acidic residues predominate over residues 2426-2440 (LELDERGDREEEVER). Ser-2444 is modified (phosphoserine). Lys-2667 carries the N6-acetyllysine modification.

Interacts with KLF6 and KLF9. Interacts via (ZZ-type 2 zinc finger) with histone H3 trimethylated at 'Lys-4' (H3K4me3) and histone H3 acetylated at 'Lys-4' (H3K4ac). As to expression, expressed at low levels in cerebellum.

Histone H3 reader which may act as a transcriptional coactivator for KLF6 and KLF9 transcription factors. The polypeptide is Zinc finger ZZ-type and EF-hand domain-containing protein 1 (Homo sapiens (Human)).